The following is a 386-amino-acid chain: Succinate--CoA ligase [ADP-forming] subunit beta (386 aa).

In terms of domain architecture, ATP-grasp spans 9–244; sequence KALFREHGIP…ETQEDAREAR (236 aa). ATP contacts are provided by residues lysine 46, 53–55, glutamate 99, threonine 102, and glutamate 107; that span reads GRG. Mg(2+) contacts are provided by asparagine 199 and aspartate 213. Residues asparagine 264 and 321-323 contribute to the substrate site; that span reads GIV.

Belongs to the succinate/malate CoA ligase beta subunit family. As to quaternary structure, heterotetramer of two alpha and two beta subunits. It depends on Mg(2+) as a cofactor.

It catalyses the reaction succinate + ATP + CoA = succinyl-CoA + ADP + phosphate. The catalysed reaction is GTP + succinate + CoA = succinyl-CoA + GDP + phosphate. It participates in carbohydrate metabolism; tricarboxylic acid cycle; succinate from succinyl-CoA (ligase route): step 1/1. Succinyl-CoA synthetase functions in the citric acid cycle (TCA), coupling the hydrolysis of succinyl-CoA to the synthesis of either ATP or GTP and thus represents the only step of substrate-level phosphorylation in the TCA. The beta subunit provides nucleotide specificity of the enzyme and binds the substrate succinate, while the binding sites for coenzyme A and phosphate are found in the alpha subunit. The polypeptide is Succinate--CoA ligase [ADP-forming] subunit beta (Thioalkalivibrio sulfidiphilus (strain HL-EbGR7)).